Reading from the N-terminus, the 517-residue chain is GMP synthase [glutamine-hydrolyzing] (517 aa).

Residues 11–202 (KIIVLDFGSQ…AFDVCEAKAN (192 aa)) enclose the Glutamine amidotransferase type-1 domain. Cys88 functions as the Nucleophile in the catalytic mechanism. Catalysis depends on residues His176 and Glu178. Residues 203 to 392 (WSMNDFIDMQ…LGMPEDLVWR (190 aa)) form the GMPS ATP-PPase domain. Position 230–236 (230–236 (SGGVDSS)) interacts with ATP.

In terms of assembly, homodimer.

It carries out the reaction XMP + L-glutamine + ATP + H2O = GMP + L-glutamate + AMP + diphosphate + 2 H(+). Its pathway is purine metabolism; GMP biosynthesis; GMP from XMP (L-Gln route): step 1/1. In terms of biological role, catalyzes the synthesis of GMP from XMP. The polypeptide is GMP synthase [glutamine-hydrolyzing] (Pediococcus pentosaceus (strain ATCC 25745 / CCUG 21536 / LMG 10740 / 183-1w)).